Reading from the N-terminus, the 577-residue chain is Sensor histidine kinase YesM (577 aa).

Topologically, residues 1–17 (MKKRVAGWYRRMKIKDK) are cytoplasmic. The chain crosses the membrane as a helical span at residues 18 to 38 (LFVFLSLIMAVSFLFVYSGVQ). At 39–286 (YAFHVYDEQI…PFDQMFAKIS (248 aa)) the chain is on the extracellular side. The chain crosses the membrane as a helical span at residues 287–307 (FMKTVIGTCFLLFFCVVLLFG). The Cytoplasmic segment spans residues 308–577 (RKIANSITEP…ITIPCRNEVV (270 aa)). The region spanning 312-368 (NSITEPIEQLVTAMKSVQHSGIEAGVSLSLPEHTQDEAGMLNRHFTVMMKRINELME) is the HAMP domain. The Histidine kinase domain maps to 365 to 574 (ELMEENVEKQ…RIVITIPCRN (210 aa)). Histidine 392 bears the Phosphohistidine; by autocatalysis mark.

Its subcellular location is the cell membrane. The catalysed reaction is ATP + protein L-histidine = ADP + protein N-phospho-L-histidine.. Functionally, member of the two-component regulatory system YesM/YesN. Probably activates YesN by phosphorylation. This is Sensor histidine kinase YesM (yesM) from Bacillus subtilis (strain 168).